A 518-amino-acid chain; its full sequence is GMP synthase [glutamine-hydrolyzing] (518 aa).

The 194-residue stretch at 8–201 folds into the Glutamine amidotransferase type-1 domain; that stretch reads TVLIIDFGSQ…VHKISGLKGN (194 aa). The active-site Nucleophile is Cys85. Residues His175 and Glu177 contribute to the active site. The GMPS ATP-PPase domain maps to 202 to 393; it reads WSMASYRDQA…LGLPEQFLGR (192 aa). Residue 229-235 coordinates ATP; sequence SGGVDSS.

As to quaternary structure, homodimer.

It catalyses the reaction XMP + L-glutamine + ATP + H2O = GMP + L-glutamate + AMP + diphosphate + 2 H(+). Its pathway is purine metabolism; GMP biosynthesis; GMP from XMP (L-Gln route): step 1/1. Functionally, catalyzes the synthesis of GMP from XMP. This Bartonella quintana (strain Toulouse) (Rochalimaea quintana) protein is GMP synthase [glutamine-hydrolyzing].